We begin with the raw amino-acid sequence, 194 residues long: Ras-like protein rasS (194 aa).

Residue 10-17 (GPGGVGKS) coordinates GTP. The short motif at 32–40 (YDPTLEDSY) is the Effector region element. Residues 57-61 (DTAGQ) and 116-119 (NKCD) contribute to the GTP site. The disordered stretch occupies residues 168 to 194 (RQSNQHSNSQEQNTDQPIKKKKSCNLL). Positions 169-180 (QSNQHSNSQEQN) are enriched in low complexity. Cysteine 191 carries the post-translational modification Cysteine methyl ester. The S-geranylgeranyl cysteine moiety is linked to residue cysteine 191. The propeptide at 192-194 (NLL) is removed in mature form.

The protein belongs to the small GTPase superfamily. Ras family.

Its subcellular location is the cell membrane. It catalyses the reaction GTP + H2O = GDP + phosphate + H(+). Its function is as follows. Ras proteins bind GDP/GTP and possess intrinsic GTPase activity. This chain is Ras-like protein rasS (rasS), found in Dictyostelium discoideum (Social amoeba).